A 68-amino-acid chain; its full sequence is Antimicrobial peptide UyCT5 (68 aa).

Residues Met1 to Ala23 form the signal peptide. The residue at position 36 (Leu36) is a Leucine amide. The propeptide occupies Gly40–Arg68.

This sequence belongs to the non-disulfide-bridged peptide (NDBP) superfamily. Short antimicrobial peptide (group 4) family. In terms of tissue distribution, expressed by the venom gland.

It localises to the secreted. It is found in the target cell membrane. Antimicrobial peptide that inhibits the growth of Gram-positive (S.aureus, MIC=1 uM) and Gram-negative bacteria (E.coli, MIC=15 uM and P.aeruginosa, MIC=2 uM). It also shows 37% of hemolysis when 15 uM are tested (93% at 50 uM). This is Antimicrobial peptide UyCT5 from Urodacus yaschenkoi (Inland robust scorpion).